The sequence spans 439 residues: Nitroalkane oxidase (439 aa).

Residues 131–134 (LMHS), 139–141 (TAN), 169–171 (WPS), R304, 313–314 (HQ), 375–379 (KAVGM), and 400–404 (LFDGG) each bind FAD. D402 serves as the catalytic Proton acceptor.

This sequence belongs to the acyl-CoA dehydrogenase family. Homotetramer. FAD is required as a cofactor.

It catalyses the reaction a primary nitroalkane + O2 + H2O = an aldehyde + nitrite + H2O2 + H(+). The catalysed reaction is a secondary nitroalkane + O2 + H2O = a ketone + nitrite + H2O2 + H(+). Its activity is regulated as follows. Strongly inhibited by mercury chloride and KCN. In terms of biological role, catalyzes the oxidative denitrification of neutral nitroalkanes, including 3-nitro-2-pentanol, 1-nitropropane, 2-nitropropane, nitroethane and nitrocyclohexane, and may thereby protect the organism against toxic compounds. Has no detectable acyl-CoA dehydrogenase activity. The protein is Nitroalkane oxidase of Fusarium oxysporum (Fusarium vascular wilt).